Here is a 362-residue protein sequence, read N- to C-terminus: MSKNIIILSGDHVGPEVTAEAIKVLEAITQARPNVKFNFDHKLIGGAAIDATGSPLPDETLEASKKADAVLLGAVGGPKWGTGAVRPEQGLLKIRKELNLYANLRPCNFMSEKLLDLSPLRSEIVKGTNFTVVRELVGGIYFGTRKEDEGNGEAWDTEKYTVEEVKRITRMAAFLALQSNPPLPVWSLDKANVLASSRLWRKTVTETIEKEFPQLTLNHQLIDSAAMILIQNPSKMNGVIVTSNMFGDIISDEASVIPGSLGLLPSASLSSLPDKNTAFGLYEPCHGSAPDLPPNKVNPIATILSAAMMLRLSLNLKEEADAVEKAVSKVIDNGIVTADLKGASSTTEVGDAVAAEVQKLLK.

Residue 77–88 (GPKWGTGAVRPE) participates in NAD(+) binding. Substrate is bound by residues arginine 95, arginine 105, arginine 134, and aspartate 223. Mg(2+)-binding residues include aspartate 223, aspartate 248, and aspartate 252. 287 to 298 (GSAPDLPPNKVN) serves as a coordination point for NAD(+).

The protein belongs to the isocitrate and isopropylmalate dehydrogenases family. Homodimer. The cofactor is Mg(2+). It depends on Mn(2+) as a cofactor.

Its subcellular location is the cytoplasm. The catalysed reaction is (2R,3S)-3-isopropylmalate + NAD(+) = 4-methyl-2-oxopentanoate + CO2 + NADH. It participates in amino-acid biosynthesis; L-leucine biosynthesis; L-leucine from 3-methyl-2-oxobutanoate: step 3/4. Its function is as follows. Catalyzes the oxidation of 3-carboxy-2-hydroxy-4-methylpentanoate (3-isopropylmalate) to 3-carboxy-4-methyl-2-oxopentanoate. The product decarboxylates to 4-methyl-2 oxopentanoate. In Blastobotrys adeninivorans (Yeast), this protein is 3-isopropylmalate dehydrogenase (LEU2).